The following is a 210-amino-acid chain: Small ribosomal subunit protein uS7 (210 aa).

Belongs to the universal ribosomal protein uS7 family.

The chain is Small ribosomal subunit protein uS7 (RPS5) from Podocoryna carnea (Hydrozoan).